The primary structure comprises 116 residues: Large ribosomal subunit protein uL18 (116 aa).

This sequence belongs to the universal ribosomal protein uL18 family. In terms of assembly, part of the 50S ribosomal subunit; part of the 5S rRNA/L5/L18/L25 subcomplex. Contacts the 5S and 23S rRNAs.

In terms of biological role, this is one of the proteins that bind and probably mediate the attachment of the 5S RNA into the large ribosomal subunit, where it forms part of the central protuberance. This chain is Large ribosomal subunit protein uL18, found in Ectopseudomonas mendocina (strain ymp) (Pseudomonas mendocina).